A 682-amino-acid polypeptide reads, in one-letter code: Potassium-transporting ATPase ATP-binding subunit (682 aa).

4 helical membrane passes run 34–54 (PVMF…IAMA), 62–82 (ALFS…ANFA), 219–239 (IALT…TATL), and 254–274 (VLVA…LSAI). The active-site 4-aspartylphosphate intermediate is Asp307. Residues Asp344, Glu348, 377-384 (FTAQSRMS), and Lys395 contribute to the ATP site. Mg(2+) contacts are provided by Asp518 and Asp522. The next 3 helical transmembrane spans lie at 588 to 608 (FAII…LNIM), 616 to 636 (AILS…PLAL), and 656 to 676 (IYGL…DLLL).

This sequence belongs to the cation transport ATPase (P-type) (TC 3.A.3) family. Type IA subfamily. The system is composed of three essential subunits: KdpA, KdpB and KdpC.

The protein resides in the cell inner membrane. The catalysed reaction is K(+)(out) + ATP + H2O = K(+)(in) + ADP + phosphate + H(+). Functionally, part of the high-affinity ATP-driven potassium transport (or Kdp) system, which catalyzes the hydrolysis of ATP coupled with the electrogenic transport of potassium into the cytoplasm. This subunit is responsible for energy coupling to the transport system and for the release of the potassium ions to the cytoplasm. The polypeptide is Potassium-transporting ATPase ATP-binding subunit (Escherichia coli (strain K12 / MC4100 / BW2952)).